A 426-amino-acid polypeptide reads, in one-letter code: Chordin-like protein 2 (426 aa).

The first 25 residues, 1–25, serve as a signal peptide directing secretion; it reads MVPGVRIIPSLLGLVMFWLPLDSQA. VWFC domains follow at residues 31 to 96 and 109 to 175; these read KVCL…PRCV and KSCQ…QTCK. N-linked (GlcNAc...) asparagine glycosylation occurs at Asn-114. Ser-182 carries the post-translational modification Phosphoserine. Polar residues predominate over residues 182 to 191; it reads STEENLTQLQ. The segment at 182–216 is disordered; it reads STEENLTQLQHGERHSQDPCSERRGPSTPAPTSLS. N-linked (GlcNAc...) asparagine glycosylation occurs at Asn-186. Basic and acidic residues predominate over residues 192-206; the sequence is HGERHSQDPCSERRG. Over residues 207–216 the composition is skewed to low complexity; sequence PSTPAPTSLS. One can recognise a VWFC 3 domain in the interval 246–311; the sequence is KACTHNGKTY…VAGKCCKICP (66 aa).

As to quaternary structure, interacts with GDF5. May interact with INHBA, BMP2, BMP4, BMP5, BMP6, and BMP7. In terms of tissue distribution, weakly expressed in the liver and kidney. In reproductive organs expressed in connective tissues such as ligaments of the ovary and oviduct in females, and of testis, epididymis and certain male accessory sex glands in males. Expression was high in uterine myometrium. Weakly expressed in cartilage of the femoral head, patella, articular facets of vertebrae, in the annulus fibrosus of intervertebral disks. In normal cartilage, expression was confined to articular chondrocytes especially in the superficial zone.

The protein resides in the secreted. Functionally, implicated in tumor angiogenesis. May inhibits BMPs activity by blocking their interaction with their receptors. Has a negative regulator effect on the cartilage formation/regeneration from immature mesenchymal cells, by preventing or reducing the rate of matrix accumulation. May play a role during myoblast and osteoblast differentiation, and maturation. This chain is Chordin-like protein 2 (Chrdl2), found in Mus musculus (Mouse).